The sequence spans 136 residues: Small ribosomal subunit protein uS9 (136 aa).

Over residues 103–116 (PLKTEGHLSRDPRA) the composition is skewed to basic and acidic residues. Positions 103–136 (PLKTEGHLSRDPRAKERRKYGLKKARKAPQFSKR) are disordered. Residues 117–136 (KERRKYGLKKARKAPQFSKR) show a composition bias toward basic residues.

The protein belongs to the universal ribosomal protein uS9 family.

In Prochlorococcus marinus (strain SARG / CCMP1375 / SS120), this protein is Small ribosomal subunit protein uS9 (rpsI).